Consider the following 243-residue polypeptide: Amphiregulin (243 aa).

Positions 1-24 are cleaved as a signal peptide; it reads MRTPSLSLALSVLSLLVLGSGHYA. A propeptide spanning residues 25–96 is cleaved from the precursor; it reads AGLELNGTSS…IVDDSVRVEQ (72 aa). N30 is a glycosylation site (N-linked (GlcNAc...) asparagine). Over residues 55–67 the composition is skewed to polar residues; the sequence is STISEMPSGSELS. 2 disordered regions span residues 55 to 75 and 98 to 135; these read STIS…DYSE and IKPK…KKKN. Residues 98-113 are compositionally biased toward basic and acidic residues; the sequence is IKPKENKTEGEKSSEK. Residue N103 is glycosylated (N-linked (GlcNAc...) asparagine). Positions 114 to 135 are enriched in basic residues; it reads PKRKKKGGKGGKGRRNRKKKKN. The region spanning 133–173 is the EGF-like domain; that stretch reads KKNPCAAKFQNFCIHGECRYIENLEVVTCHCHQDYFGERCG. 3 disulfides stabilise this stretch: C137-C150, C145-C161, and C163-C172. The chain crosses the membrane as a helical span at residues 190–213; the sequence is IALAAIIVFVSAVSVAAIGIITAV. N-linked (GlcNAc...) asparagine glycosylation is present at N236.

It belongs to the amphiregulin family. The immature precursor interacts with CNIH.

The protein localises to the membrane. Ligand of the EGF receptor/EGFR. Autocrine growth factor as well as a mitogen for a broad range of target cells including astrocytes, Schwann cells and fibroblasts. This is Amphiregulin (Areg) from Rattus norvegicus (Rat).